Consider the following 359-residue polypeptide: Phospho-N-acetylmuramoyl-pentapeptide-transferase (359 aa).

The next 10 helical transmembrane spans lie at 3–23 (LILI…PALI), 55–75 (VAIL…GMAM), 80–100 (PSAS…VGFI), 117–137 (TAKT…ALQF), 156–176 (IATV…VVSA), 187–207 (LDGL…LITF), 231–251 (LALV…WNAA), 255–275 (IFMG…ISVT), 280–300 (ILAV…VVQI), and 334–354 (FWLL…GEWL).

The protein belongs to the glycosyltransferase 4 family. MraY subfamily. The cofactor is Mg(2+).

Its subcellular location is the cell membrane. It catalyses the reaction UDP-N-acetyl-alpha-D-muramoyl-L-alanyl-gamma-D-glutamyl-meso-2,6-diaminopimeloyl-D-alanyl-D-alanine + di-trans,octa-cis-undecaprenyl phosphate = di-trans,octa-cis-undecaprenyl diphospho-N-acetyl-alpha-D-muramoyl-L-alanyl-D-glutamyl-meso-2,6-diaminopimeloyl-D-alanyl-D-alanine + UMP. It functions in the pathway cell wall biogenesis; peptidoglycan biosynthesis. In terms of biological role, catalyzes the initial step of the lipid cycle reactions in the biosynthesis of the cell wall peptidoglycan: transfers peptidoglycan precursor phospho-MurNAc-pentapeptide from UDP-MurNAc-pentapeptide onto the lipid carrier undecaprenyl phosphate, yielding undecaprenyl-pyrophosphoryl-MurNAc-pentapeptide, known as lipid I. The sequence is that of Phospho-N-acetylmuramoyl-pentapeptide-transferase from Mycolicibacterium smegmatis (strain ATCC 700084 / mc(2)155) (Mycobacterium smegmatis).